The sequence spans 235 residues: uncharacterized protein (235 aa).

The signal sequence occupies residues 1 to 24 (MSDRMKLKGLLAFCLLFLSSFVLA).

This is an uncharacterized protein from Haemophilus influenzae (strain ATCC 51907 / DSM 11121 / KW20 / Rd).